The following is a 119-amino-acid chain: MGNMGTSELLKHIYDINLSYLLLAQRLINDEKASAMFRLGINDEMANILMQLTLPQMVKLAETNQLICHFRFNDHNTIKVLTQESRVDDLQQIHTGILLSSSLLQQLASKEENLPKKRA.

Belongs to the FlhD family. In terms of assembly, homodimer; disulfide-linked. Forms a heterohexamer composed of two FlhC and four FlhD subunits. Each FlhC binds a FlhD dimer, forming a heterotrimer, and a hexamer assembles by dimerization of two heterotrimers.

The protein resides in the cytoplasm. Its function is as follows. Functions in complex with FlhC as a master transcriptional regulator that regulates transcription of several flagellar and non-flagellar operons by binding to their promoter region. Activates expression of class 2 flagellar genes, including fliA, which is a flagellum-specific sigma factor that turns on the class 3 genes. Also regulates genes whose products function in a variety of physiological pathways. This chain is Flagellar transcriptional regulator FlhD, found in Pectobacterium atrosepticum (strain SCRI 1043 / ATCC BAA-672) (Erwinia carotovora subsp. atroseptica).